We begin with the raw amino-acid sequence, 956 residues long: MLSINNKLKNLKLSTVKNLYNKSSSISIILVNNNNNNNNNNNNNNNNNNNNNNNNNNFISLSTTNLFNQKLCIESYKKVNYCKKKGGGNKNNDDNDNEKNEKNEKKVKNEKKEKNEKNDGNEKVEIVEDNDLIVPLSKELLQFDKPSNKRKDWPLNSEVVIYPSNSVNFIGTTGPINLGFQFITRLVPNASGKTFLGFFLCKDAYRNNNNQIGRTIDSIHNVGVLAQVTLSPSGIYHFETIKRIRIKEVQNGQFPFIASIEPLSNDERELKDPRIAELMTKINVLSLEYRKLYPDVYTINSVDFENQIEVIDNPDYYLAAVINYYGLNYPDECQKILETQSVVKRLEMLYHMILNEQPLLALQQKIAKDLDDKTTAYKNKLLLTEQLKKLKALLGNETDEKEKTIEKYQNKLSELTLISESSKKVIQDEIYKISTIDPSSSEYSALKNYLEWLTNLPWGIYSADYFDLKHSKMVLDSDHYGLEDIKQRILEFISVGHIKGTVQGKILCFIGPPGTGKTSIAKSIAKALKKEFFRFSVGGLFDESEIKGHRRTYVGSMPGKIIQALKITQTSNPVILIDEIDKIGKRNHGDPSSALLEVLDPEQNVSFVDHYLDTPYDLSKVLFICTANSGQDIPAALSDRMEIIRLPGYVEEEQIEIVKNFIIPKTFIDCGIKLDQLSISDDVIKQIVKFYSREVGIRELEKLIEKIMRKTALKLVNGTAERVDLTLDNLEQYLGIPSYTSDRYYDVTPIGVVNGLAYTKKGGATLYIESTSEEIQKPLSSLPPSQQQQNQLEPSIKTTGNLGDVMSESSTIAYTFAKNFLYELDPNNTFFSNHNIHLHSPQGNIPKDGPSAGVTMVTSLLSLALNEPVQNNLGMTGEVTITGKVITIGGVKEKTIAAKRSGLTSVIFPINNRINFEELPTYIKNDIDVTYANDYKDVFEVAFPNKKYLLNNLKTF.

Disordered stretches follow at residues 37–57 and 83–123; these read NNNN…NNNN and KKKG…GNEK. A compositionally biased stretch (basic and acidic residues) spans 91–123; the sequence is NNDDNDNEKNEKNEKKVKNEKKEKNEKNDGNEK. Residues 159–357 form the Lon N-terminal domain; that stretch reads VVIYPSNSVN…MLYHMILNEQ (199 aa). Residue 511-518 participates in ATP binding; the sequence is GPPGTGKT. Positions 747 to 945 constitute a Lon proteolytic domain; the sequence is VTPIGVVNGL…KDVFEVAFPN (199 aa). Over residues 777-795 the composition is skewed to low complexity; the sequence is KPLSSLPPSQQQQNQLEPS. The tract at residues 777–800 is disordered; the sequence is KPLSSLPPSQQQQNQLEPSIKTTG. Catalysis depends on residues S851 and K894.

This sequence belongs to the peptidase S16 family. In terms of assembly, homohexamer or homoheptamer. Organized in a ring with a central cavity.

The protein localises to the mitochondrion matrix. The enzyme catalyses Hydrolysis of proteins in presence of ATP.. In terms of biological role, ATP-dependent serine protease that mediates the selective degradation of misfolded, unassembled or oxidatively damaged polypeptides as well as certain short-lived regulatory proteins in the mitochondrial matrix. May also have a chaperone function in the assembly of inner membrane protein complexes. Participates in the regulation of mitochondrial gene expression and in the maintenance of the integrity of the mitochondrial genome. Binds to mitochondrial DNA in a site-specific manner. In Dictyostelium discoideum (Social amoeba), this protein is Lon protease homolog, mitochondrial 1.